The sequence spans 574 residues: Proline--tRNA ligase (574 aa).

The protein belongs to the class-II aminoacyl-tRNA synthetase family. ProS type 1 subfamily. As to quaternary structure, homodimer.

It localises to the cytoplasm. It carries out the reaction tRNA(Pro) + L-proline + ATP = L-prolyl-tRNA(Pro) + AMP + diphosphate. In terms of biological role, catalyzes the attachment of proline to tRNA(Pro) in a two-step reaction: proline is first activated by ATP to form Pro-AMP and then transferred to the acceptor end of tRNA(Pro). As ProRS can inadvertently accommodate and process non-cognate amino acids such as alanine and cysteine, to avoid such errors it has two additional distinct editing activities against alanine. One activity is designated as 'pretransfer' editing and involves the tRNA(Pro)-independent hydrolysis of activated Ala-AMP. The other activity is designated 'posttransfer' editing and involves deacylation of mischarged Ala-tRNA(Pro). The misacylated Cys-tRNA(Pro) is not edited by ProRS. The polypeptide is Proline--tRNA ligase (Ralstonia nicotianae (strain ATCC BAA-1114 / GMI1000) (Ralstonia solanacearum)).